Reading from the N-terminus, the 177-residue chain is Transmembrane protein 275 (177 aa).

The disordered stretch occupies residues Met-1–Arg-20. The next 2 membrane-spanning stretches (helical) occupy residues Gly-36–Leu-56 and Leu-63–Cys-83. The segment at Glu-113–Ser-177 is disordered. The segment covering Ser-128–Pro-161 has biased composition (low complexity).

Its subcellular location is the membrane. The protein is Transmembrane protein 275 of Mus musculus (Mouse).